A 1209-amino-acid chain; its full sequence is 3',5'-cyclic-AMP phosphodiesterase, isoform I (1209 aa).

Disordered regions lie at residues 16 to 35 (NVAK…GSGT), 59 to 82 (GGGS…KRKS), 275 to 353 (LYSG…PLPP), 372 to 403 (SATS…SPRI), 442 to 498 (ETLA…MQAE), 626 to 655 (VPAS…LSQG), and 754 to 792 (SAGQ…RLPT). Gly residues-rich tracts occupy residues 25 to 35 (SSNGTGNGSGT) and 59 to 77 (GGGS…GSGS). Residues 275-290 (LYSGSNPSTNPCQSAV) are compositionally biased toward polar residues. Residues 291 to 314 (QNQGQNSNPNPNQNPNTNPNQNQQ) are compositionally biased toward low complexity. Residues 315–324 (RCSCQPQTSP) are compositionally biased toward polar residues. The segment covering 372-383 (SATSSSAGTVPP) has biased composition (low complexity). Positions 385 to 400 (GQQTQEYIAGTSSTPS) are enriched in polar residues. 2 stretches are compositionally biased toward low complexity: residues 445–462 (ASSS…NSSS) and 472–483 (TSSSASALATSH). 2 stretches are compositionally biased toward polar residues: residues 484–498 (PSNS…MQAE) and 627–645 (PASN…SRSG). One can recognise a PDEase domain in the interval 795–1124 (VETPRENELG…DYYQSMIPPS (330 aa)). The Proton donor role is filled by His871. 871–875 (HNSLH) is a binding site for 3',5'-cyclic AMP. Residues His875, His911, Asp912, and Asp1029 each contribute to the a divalent metal cation site. 3',5'-cyclic AMP contacts are provided by Asp912, Asp1029, and Gln1080. Over residues 1146–1163 (EESDQENLAELEEGDESG) the composition is skewed to acidic residues. Residues 1146–1209 (EESDQENLAE…CQNQPQHGGM (64 aa)) are disordered. Residues 1164-1181 (GESTTTGTTGTTAASALS) are compositionally biased toward low complexity. Residues 1182-1193 (GAGGGGGGGGGM) show a composition bias toward gly residues. A compositionally biased stretch (polar residues) spans 1199-1209 (GCQNQPQHGGM).

Belongs to the cyclic nucleotide phosphodiesterase family. PDE4 subfamily. Monomer. It depends on a divalent metal cation as a cofactor.

The catalysed reaction is 3',5'-cyclic AMP + H2O = AMP + H(+). It functions in the pathway purine metabolism; 3',5'-cyclic AMP degradation; AMP from 3',5'-cyclic AMP: step 1/1. Hydrolyzes the second messenger cAMP, which is a key regulator of many important physiological processes. Vital for female fertility. Required for learning/memory. The polypeptide is 3',5'-cyclic-AMP phosphodiesterase, isoform I (Drosophila melanogaster (Fruit fly)).